Consider the following 245-residue polypeptide: Putative binding protein HI_1525 (245 aa).

A signal peptide spans 1–19 (MKKLVAVTSMILTTFSVQA). 2 residues coordinate molybdate: serine 56 and valine 163.

Belongs to the bacterial solute-binding protein ModA family.

The protein localises to the periplasm. Functionally, probably involved in the binding-dependent system. This chain is Putative binding protein HI_1525, found in Haemophilus influenzae (strain ATCC 51907 / DSM 11121 / KW20 / Rd).